We begin with the raw amino-acid sequence, 745 residues long: Protein transport protein SEC23 D (745 aa).

C53, C56, C73, and C76 together coordinate Zn(2+). Residues 53–76 (CENCYAYFNTYCELDQWAWNCSLC) are zinc finger-like.

It belongs to the SEC23/SEC24 family. SEC24 subfamily. In terms of assembly, component of the coat protein complex II (COPII), composed of at least five proteins: the Sec23/24 complex, the Sec13/31 complex and Sar1. In terms of tissue distribution, mostly expressed in closed floral bud, pollen and flowers, and, to a lower extent, in mature siliques, roots and leaf primordia.

It is found in the cytoplasmic vesicle. It localises to the COPII-coated vesicle membrane. The protein localises to the endoplasmic reticulum membrane. Its subcellular location is the membrane. Component of the coat protein complex II (COPII) which promotes the formation of transport vesicles from the endoplasmic reticulum (ER). The coat has two main functions, the physical deformation of the endoplasmic reticulum membrane into vesicles and the selection of cargo molecules. May contribute to COPII-coated vesicles formation and ER-Golgi vesicle transport. Together with SEC23A, essential for pollen wall development and exine patterning, probably by regulating endoplasmic reticulum (ER) export of lipids and proteins (e.g. sporopollenin) necessary for pollen wall formation. Also involved in plastid physiology in anther tapetal cells. In Arabidopsis thaliana (Mouse-ear cress), this protein is Protein transport protein SEC23 D.